Consider the following 65-residue polypeptide: Large ribosomal subunit protein bL35 (65 aa).

It belongs to the bacterial ribosomal protein bL35 family.

This Caldicellulosiruptor saccharolyticus (strain ATCC 43494 / DSM 8903 / Tp8T 6331) protein is Large ribosomal subunit protein bL35.